The chain runs to 172 residues: Ribosome maturation factor RimM (172 aa).

One can recognise a PRC barrel domain in the interval 96 to 168 (EGEFYYHQII…RVDVELMEGL (73 aa)).

The protein belongs to the RimM family. In terms of assembly, binds ribosomal protein uS19.

The protein localises to the cytoplasm. Its function is as follows. An accessory protein needed during the final step in the assembly of 30S ribosomal subunit, possibly for assembly of the head region. Essential for efficient processing of 16S rRNA. May be needed both before and after RbfA during the maturation of 16S rRNA. It has affinity for free ribosomal 30S subunits but not for 70S ribosomes. This chain is Ribosome maturation factor RimM, found in Streptococcus pyogenes serotype M28 (strain MGAS6180).